A 476-amino-acid polypeptide reads, in one-letter code: MKVSLPAFEKARVLVVGDVMLDRYWVGPTGRISPEAPVPVVKINQVEDRPGGAANVALNIATLGGQVQLAGLVGQDDTAVALTLGVQTLGVEPQWLSIADKPTITKLRVLSRNQQLIRLDFEEAFDKADSVRLLKQSEALLDSVDVVVLSDYAKGAIDQPRDFIALARSKGVMVLVDPKGSDFGRYHGASLITPNMSEFEAVVGTVTSEADLLEKARGLLKEHHFDAILVTRSEKGMTLVTANAPELHIPTVAREVYDVTGAGDTVISALATSLAAGADLPQACAIANTAAGVVVGKLGTSTVSRIELIEALALHHGESGFGVVSEDQLAYALEQAKLRGERVVMTNGCFDILHAGHVSYLKQAKALGDRLIVAVNDDASVKRLKGEGRPVNQVDRRMAVLAGLASVDWVVPFSEDTPQRIIARLLPDLLVKGGDYKIEDIAGGAEVIAAGGQVQVLGFEDGISTTAIIQNIMANQ.

Residues 1–319 are ribokinase; it reads MKVSLPAFEK…EALALHHGES (319 aa). 195–198 provides a ligand contact to ATP; it reads NMSE. Asp-264 is a catalytic residue. A cytidylyltransferase region spans residues 345 to 476; the sequence is MTNGCFDILH…AIIQNIMANQ (132 aa).

It in the N-terminal section; belongs to the carbohydrate kinase PfkB family. This sequence in the C-terminal section; belongs to the cytidylyltransferase family. In terms of assembly, homodimer.

It catalyses the reaction D-glycero-beta-D-manno-heptose 7-phosphate + ATP = D-glycero-beta-D-manno-heptose 1,7-bisphosphate + ADP + H(+). The enzyme catalyses D-glycero-beta-D-manno-heptose 1-phosphate + ATP + H(+) = ADP-D-glycero-beta-D-manno-heptose + diphosphate. It participates in nucleotide-sugar biosynthesis; ADP-L-glycero-beta-D-manno-heptose biosynthesis; ADP-L-glycero-beta-D-manno-heptose from D-glycero-beta-D-manno-heptose 7-phosphate: step 1/4. Its pathway is nucleotide-sugar biosynthesis; ADP-L-glycero-beta-D-manno-heptose biosynthesis; ADP-L-glycero-beta-D-manno-heptose from D-glycero-beta-D-manno-heptose 7-phosphate: step 3/4. Its function is as follows. Catalyzes the phosphorylation of D-glycero-D-manno-heptose 7-phosphate at the C-1 position to selectively form D-glycero-beta-D-manno-heptose-1,7-bisphosphate. Catalyzes the ADP transfer from ATP to D-glycero-beta-D-manno-heptose 1-phosphate, yielding ADP-D-glycero-beta-D-manno-heptose. This is Bifunctional protein HldE from Shewanella putrefaciens (strain CN-32 / ATCC BAA-453).